Consider the following 146-residue polypeptide: Leghemoglobin 1 (146 aa).

The region spanning 2–146 (GFTEKQEALV…LAAAIKKAMG (145 aa)) is the Globin domain. Position 29 is a nitrated tyrosine (tyrosine 29). Serine 44 contacts heme b. Serine 44 is modified (phosphoserine). Histidine 61 is a binding site for O2. Positions 64, 93, and 96 each coordinate heme b. Tyrosine 134 carries the nitrated tyrosine modification.

The protein belongs to the plant globin family. As to quaternary structure, monomer. In terms of processing, nitrated in effective nodules and particularly in hypoxic conditions; this mechanism may play a protective role in the symbiosis by buffering toxic peroxynitrite NO(2)(-). Nitration level decrease during nodule senescence. Phosphorylation at Ser-44 disrupts the molecular environment of its porphyrin ring oxygen binding pocket, thus leading to a reduced oxygen consumption and to the delivery of oxygen O(2) to symbiosomes. As to expression, root nodules.

It localises to the cytoplasm. The protein resides in the cytosol. Its subcellular location is the nucleus. Its function is as follows. Leghemoglobin that reversibly binds oxygen O(2) through a pentacoordinated heme iron. In root nodules, facilitates the diffusion of oxygen to the bacteroids while preventing the bacterial nitrogenase from being inactivated by buffering dioxygen, nitric oxide and carbon monoxide, and promoting the formation of reactive oxygen species (ROS, e.g. H(2)O(2)). This role is essential for symbiotic nitrogen fixation (SNF). The chain is Leghemoglobin 1 from Medicago truncatula (Barrel medic).